The chain runs to 320 residues: GTP 3',8-cyclase (320 aa).

The Radical SAM core domain occupies 5–225 (QFDRKINYLR…IQLIKKDEKA (221 aa)). R14 contacts GTP. C21 and C25 together coordinate [4Fe-4S] cluster. Y27 contributes to the S-adenosyl-L-methionine binding site. Position 28 (C28) interacts with [4Fe-4S] cluster. Residue R64 participates in GTP binding. G68 lines the S-adenosyl-L-methionine pocket. GTP is bound at residue T95. Residue S119 coordinates S-adenosyl-L-methionine. K155 provides a ligand contact to GTP. S-adenosyl-L-methionine is bound at residue M189. The [4Fe-4S] cluster site is built by C248 and C251. 253–255 (RIR) contacts GTP. C265 contributes to the [4Fe-4S] cluster binding site.

This sequence belongs to the radical SAM superfamily. MoaA family. In terms of assembly, monomer and homodimer. It depends on [4Fe-4S] cluster as a cofactor.

It carries out the reaction GTP + AH2 + S-adenosyl-L-methionine = (8S)-3',8-cyclo-7,8-dihydroguanosine 5'-triphosphate + 5'-deoxyadenosine + L-methionine + A + H(+). It participates in cofactor biosynthesis; molybdopterin biosynthesis. Its function is as follows. Catalyzes the cyclization of GTP to (8S)-3',8-cyclo-7,8-dihydroguanosine 5'-triphosphate. This is GTP 3',8-cyclase from Campylobacter jejuni subsp. doylei (strain ATCC BAA-1458 / RM4099 / 269.97).